Here is a 326-residue protein sequence, read N- to C-terminus: D-amino-acid oxidase (326 aa).

FAD is bound by residues G14, V15, I16, D36, S44, A48, A49, I50, and V157. 2 residues coordinate D-proline: Y219 and R274. D-serine is bound by residues Y219 and R274. FAD is bound by residues R274, G299, G300, G302, and T304. G300 contributes to the D-proline binding site. G300 contacts D-serine.

The protein belongs to the DAMOX/DASOX family. In terms of assembly, homodimer. The cofactor is FAD.

The protein localises to the cytoplasm. Its subcellular location is the secreted. It localises to the cell wall. It catalyses the reaction a D-alpha-amino acid + O2 + H2O = a 2-oxocarboxylate + H2O2 + NH4(+). It carries out the reaction D-phenylalanine + O2 + H2O = 3-phenylpyruvate + H2O2 + NH4(+). The catalysed reaction is D-lysine + O2 + H2O = 6-amino-2-oxohexanoate + H2O2 + NH4(+). The enzyme catalyses D-methionine + O2 + H2O = 4-methylsulfanyl-2-oxobutanoate + H2O2 + NH4(+). It catalyses the reaction D-arginine + O2 + H2O = 5-guanidino-2-oxopentanoate + H2O2 + NH4(+). It carries out the reaction D-ornithine + O2 + H2O = 5-amino-2-oxopentanoate + H2O2 + NH4(+). The catalysed reaction is D-leucine + O2 + H2O = 4-methyl-2-oxopentanoate + H2O2 + NH4(+). The enzyme catalyses D-alanine + O2 + H2O = pyruvate + H2O2 + NH4(+). It catalyses the reaction D-valine + O2 + H2O = 3-methyl-2-oxobutanoate + H2O2 + NH4(+). It carries out the reaction D-histidine + O2 + H2O = 3-(imidazol-5-yl)pyruvate + H2O2 + NH4(+). Functionally, catalyzes the oxidative deamination of D-amino acids with broad substrate specificity. This is D-amino-acid oxidase from Glutamicibacter protophormiae (Brevibacterium protophormiae).